The chain runs to 204 residues: Methylthioribulose-1-phosphate dehydratase (204 aa).

Residues His-94 and His-96 each coordinate Zn(2+).

This sequence belongs to the aldolase class II family. MtnB subfamily. Zn(2+) serves as cofactor.

It carries out the reaction 5-(methylsulfanyl)-D-ribulose 1-phosphate = 5-methylsulfanyl-2,3-dioxopentyl phosphate + H2O. It functions in the pathway amino-acid biosynthesis; L-methionine biosynthesis via salvage pathway; L-methionine from S-methyl-5-thio-alpha-D-ribose 1-phosphate: step 2/6. Catalyzes the dehydration of methylthioribulose-1-phosphate (MTRu-1-P) into 2,3-diketo-5-methylthiopentyl-1-phosphate (DK-MTP-1-P). This is Methylthioribulose-1-phosphate dehydratase from Pseudomonas syringae pv. tomato (strain ATCC BAA-871 / DC3000).